Here is a 237-residue protein sequence, read N- to C-terminus: F-box only protein 50 (237 aa).

One can recognise an FBA domain in the interval 31–231; it reads VFETKPFERN…VTDSSVIVKA (201 aa). Positions 40–82 are disordered; it reads NLLQNPSPYGVNHTVPPPEPHRSGIPPPSDRPPQLEPEGNFSG. Residues 64–74 are compositionally biased toward pro residues; that stretch reads IPPPSDRPPQL.

In terms of tissue distribution, expressed in nonspecific cytotoxic cells (NCC).

The protein resides in the cytoplasm. Functionally, may promote cell proliferation. In Danio rerio (Zebrafish), this protein is F-box only protein 50 (nccrp1).